Consider the following 338-residue polypeptide: Elongation factor Ts, mitochondrial (338 aa).

Residues 1-55 (MSLLRSLRLCLVARTGSCPLSALGPGPLLPSLQAGLPLLQSPQQWHTFHSGSWLS) constitute a mitochondrion transit peptide. Lys-89, Lys-146, and Lys-205 each carry N6-succinyllysine. Ser-283 bears the Phosphoserine mark.

The protein belongs to the EF-Ts family.

The protein localises to the mitochondrion. Associates with the EF-Tu.GDP complex and induces the exchange of GDP to GTP. It remains bound to the aminoacyl-tRNA.EF-Tu.GTP complex up to the GTP hydrolysis stage on the ribosome. The sequence is that of Elongation factor Ts, mitochondrial from Bos taurus (Bovine).